The sequence spans 548 residues: Membrane protein insertase YidC (548 aa).

Residues 6 to 26 (NLLVIALLFVSFMIWQAWEQD) form a helical membrane-spanning segment. The segment at 28-56 (NPQPQTQQTTQTTTTAAGSAADQGVPASG) is disordered. Positions 29-42 (PQPQTQQTTQTTTT) are enriched in low complexity. 4 helical membrane-spanning segments follow: residues 350 to 370 (FVGN…GIMY), 424 to 444 (FPLI…MGSI), 458 to 478 (LSAQ…MFFI), and 499 to 519 (PVIF…YYIV).

The protein belongs to the OXA1/ALB3/YidC family. Type 1 subfamily. In terms of assembly, interacts with the Sec translocase complex via SecD. Specifically interacts with transmembrane segments of nascent integral membrane proteins during membrane integration.

The protein resides in the cell inner membrane. Functionally, required for the insertion and/or proper folding and/or complex formation of integral membrane proteins into the membrane. Involved in integration of membrane proteins that insert both dependently and independently of the Sec translocase complex, as well as at least some lipoproteins. Aids folding of multispanning membrane proteins. This Salmonella dublin (strain CT_02021853) protein is Membrane protein insertase YidC.